A 283-amino-acid chain; its full sequence is NAD kinase (283 aa).

Residue Asp-66 is the Proton acceptor of the active site. Residues Asp-66–Gly-67, Asn-140–Asp-141, Arg-151, Lys-168, Asp-170, Thr-181–Ser-186, and Gln-240 each bind NAD(+).

The protein belongs to the NAD kinase family. It depends on a divalent metal cation as a cofactor.

Its subcellular location is the cytoplasm. It carries out the reaction NAD(+) + ATP = ADP + NADP(+) + H(+). Its function is as follows. Involved in the regulation of the intracellular balance of NAD and NADP, and is a key enzyme in the biosynthesis of NADP. Catalyzes specifically the phosphorylation on 2'-hydroxyl of the adenosine moiety of NAD to yield NADP. This chain is NAD kinase, found in Geobacter metallireducens (strain ATCC 53774 / DSM 7210 / GS-15).